The following is a 375-amino-acid chain: Succinyl-diaminopimelate desuccinylase (375 aa).

H66 is a binding site for Zn(2+). The active site involves D68. A Zn(2+)-binding site is contributed by D99. E133 serves as the catalytic Proton acceptor. Zn(2+)-binding residues include E134, E162, and H348.

It belongs to the peptidase M20A family. DapE subfamily. Homodimer. Requires Zn(2+) as cofactor. The cofactor is Co(2+).

The enzyme catalyses N-succinyl-(2S,6S)-2,6-diaminopimelate + H2O = (2S,6S)-2,6-diaminopimelate + succinate. Its pathway is amino-acid biosynthesis; L-lysine biosynthesis via DAP pathway; LL-2,6-diaminopimelate from (S)-tetrahydrodipicolinate (succinylase route): step 3/3. Catalyzes the hydrolysis of N-succinyl-L,L-diaminopimelic acid (SDAP), forming succinate and LL-2,6-diaminopimelate (DAP), an intermediate involved in the bacterial biosynthesis of lysine and meso-diaminopimelic acid, an essential component of bacterial cell walls. The protein is Succinyl-diaminopimelate desuccinylase of Buchnera aphidicola subsp. Acyrthosiphon pisum (strain 5A).